A 534-amino-acid polypeptide reads, in one-letter code: MFS transporter fmqE (534 aa).

A run of 12 helical transmembrane segments spans residues 48-68, 109-129, 136-156, 169-189, 194-214, 228-248, 326-346, 349-369, 379-399, 407-427, 447-467, and 478-498; these read LLLFAAYRVTHLAILPFVCAS, LWTSMTNLGQALGSLIAGFLA, WTAVSLAILSIVGTFILVFSS, GAVVGGLMAIGTTYAADVAPI, ALLQAIVFFGVAMQGVSLGIV, IVFGIQWAFATLVLIAAFLVP, AIGVPFLTQNIYFLITVGLNV, VFDIGIGGFFLGCLFVMLGWL, LWLWGLIGNFLCMVTIGALGF, LAIAVIMNVLISYGVYATVGV, VAFIVGAVGGWLFNFITPYMY, and TGFVYAGLTVVVAVISWFLVP.

The protein belongs to the major facilitator superfamily. Sugar transporter (TC 2.A.1.1) family.

The protein resides in the cytoplasmic vesicle membrane. In terms of biological role, MFS transporter; part of the gene cluster that mediates the biosynthesis of the antitumor cytotoxic peptidyl alkaloids fumiquinazolines that confer a dual-usage capability to defend against phagocytes in the environment and animal hosts. Probably involved in fumiquinazolines metabolism and transport. The protein is MFS transporter fmqE of Aspergillus fumigatus (strain ATCC MYA-4609 / CBS 101355 / FGSC A1100 / Af293) (Neosartorya fumigata).